The primary structure comprises 66 residues: Photosystem II reaction center protein J (66 aa).

The disordered stretch occupies residues 1 to 23 (MSGNKSPFPDGRIPDRLPDGRPA). A helical membrane pass occupies residues 37–57 (LWLVATAGGMAVLFVVGLFFY).

Belongs to the PsbJ family. As to quaternary structure, PSII is composed of 1 copy each of membrane proteins PsbA, PsbB, PsbC, PsbD, PsbE, PsbF, PsbH, PsbI, PsbJ, PsbK, PsbL, PsbM, PsbT, PsbX, PsbY, PsbZ, Psb30/Ycf12, peripheral proteins PsbO, CyanoQ (PsbQ), PsbU, PsbV and a large number of cofactors. It forms dimeric complexes.

It is found in the cellular thylakoid membrane. One of the components of the core complex of photosystem II (PSII). PSII is a light-driven water:plastoquinone oxidoreductase that uses light energy to abstract electrons from H(2)O, generating O(2) and a proton gradient subsequently used for ATP formation. It consists of a core antenna complex that captures photons, and an electron transfer chain that converts photonic excitation into a charge separation. The protein is Photosystem II reaction center protein J of Parasynechococcus marenigrum (strain WH8102).